Here is a 4690-residue protein sequence, read N- to C-terminus: Nonribosomal peptide synthetase sidN (4690 aa).

Residues 238 to 656 form an adenylation 1 region; that stretch reads ARVRENPGRI…LGRLSSDQIK (419 aa). The Carrier 1 domain maps to 779 to 856; it reads SSSIPMLQSV…DLDTKAQQAL (78 aa). The residue at position 816 (serine 816) is an O-(pantetheine 4'-phosphoryl)serine. The tract at residues 925–1175 is condensation 1; it reads PGGKAFIQHT…AFGNTMSGRF (251 aa). The tract at residues 1349-1760 is adenylation 2; it reads EFAQKSPNAI…GRKDDLVKIR (412 aa). The Carrier 2 domain maps to 1889 to 1965; the sequence is PAWCIKHRPL…DLINHLSVKR (77 aa). Serine 1926 bears the O-(pantetheine 4'-phosphoryl)serine mark. Residues 2001–2285 form a condensation 2 region; sequence PTTVFQDGML…SERLLESQLV (285 aa). The tract at residues 2464–2869 is adenylation 3; it reads TWAKTHPEWK…GRKDEQVKVR (406 aa). The 78-residue stretch at 3002 to 3079 folds into the Carrier 3 domain; the sequence is RDLTSIEKQI…ELGRMKNALK (78 aa). Serine 3040 is subject to O-(pantetheine 4'-phosphoryl)serine. The segment at 3121–3530 is condensation 3; the sequence is CMPLQEVLVA…QMESLVTSFT (410 aa). A Carrier 4 domain is found at 3564–3637; it reads SVLEQQIRDV…KLATHIQTTS (74 aa). Position 3598 is an O-(pantetheine 4'-phosphoryl)serine (serine 3598). The interval 3679-4087 is condensation 4; it reads VYPLTPLQAG…FESIRKHPDE (409 aa). The Carrier 5 domain occupies 4119 to 4195; sequence SAIDQFLDPL…KLCEVAFAKS (77 aa). Serine 4156 is subject to O-(pantetheine 4'-phosphoryl)serine. The tract at residues 4262–4589 is condensation 5; the sequence is WVFKAENGLD…FNAHLNILWN (328 aa).

The protein belongs to the NRP synthetase family.

Its pathway is siderophore biosynthesis. Functionally, nonribosomal peptide synthetase required for the biosynthetis of epichloenin A, an extracellular siderophore that plays a crucial role in endophyte-grass symbioses. SidN assembles epichloenin A by activating and incorporating three trans-anhydromevalonylhydroxyornithine (trans-AMHO), 1 glutamine and 4 glycine moieties. Trans-AMHO is produced from L-ornithine via 2 steps involving a L-ornithine N(5)-monooxygenase and an AHMO-N(5)-transacylase that have still to be identified. The third adenylation domain (A3) of sidN incorporates the hydroxamate groups of the siderophore which forms an octahedral iron complex. The other component amino acids are assembled by sidN adenylation domains A1 and A2. This chain is Nonribosomal peptide synthetase sidN, found in Epichloe festucae (strain E2368).